The sequence spans 251 residues: Probable transcriptional regulatory protein SYO3AOP1_0685 (251 aa).

It belongs to the TACO1 family.

It is found in the cytoplasm. This chain is Probable transcriptional regulatory protein SYO3AOP1_0685, found in Sulfurihydrogenibium sp. (strain YO3AOP1).